Consider the following 453-residue polypeptide: Bifunctional protein GlmU (453 aa).

A pyrophosphorylase region spans residues 1–225; it reads MNIVILAAGT…EWETLGVNSK (225 aa). UDP-N-acetyl-alpha-D-glucosamine is bound by residues 6 to 9, Lys20, Gln71, 76 to 77, 98 to 100, Gly135, Glu150, Asn165, and Asn223; these read LAAG, GT, and YGD. Asp100 provides a ligand contact to Mg(2+). A Mg(2+)-binding site is contributed by Asn223. The linker stretch occupies residues 226-246; it reads AQLAELERIHQRTIADALLVD. The interval 247–453 is N-acetyltransferase; it reads GVTLADPARV…GYVRPVKKKS (207 aa). Residues Arg329 and Lys347 each coordinate UDP-N-acetyl-alpha-D-glucosamine. The active-site Proton acceptor is His359. Positions 362 and 373 each coordinate UDP-N-acetyl-alpha-D-glucosamine. Residues Ala376, 382-383, Ser401, and Ala419 contribute to the acetyl-CoA site; that span reads NY.

In the N-terminal section; belongs to the N-acetylglucosamine-1-phosphate uridyltransferase family. This sequence in the C-terminal section; belongs to the transferase hexapeptide repeat family. Homotrimer. It depends on Mg(2+) as a cofactor.

It localises to the cytoplasm. It carries out the reaction alpha-D-glucosamine 1-phosphate + acetyl-CoA = N-acetyl-alpha-D-glucosamine 1-phosphate + CoA + H(+). It catalyses the reaction N-acetyl-alpha-D-glucosamine 1-phosphate + UTP + H(+) = UDP-N-acetyl-alpha-D-glucosamine + diphosphate. Its pathway is nucleotide-sugar biosynthesis; UDP-N-acetyl-alpha-D-glucosamine biosynthesis; N-acetyl-alpha-D-glucosamine 1-phosphate from alpha-D-glucosamine 6-phosphate (route II): step 2/2. The protein operates within nucleotide-sugar biosynthesis; UDP-N-acetyl-alpha-D-glucosamine biosynthesis; UDP-N-acetyl-alpha-D-glucosamine from N-acetyl-alpha-D-glucosamine 1-phosphate: step 1/1. It functions in the pathway bacterial outer membrane biogenesis; LPS lipid A biosynthesis. Its function is as follows. Catalyzes the last two sequential reactions in the de novo biosynthetic pathway for UDP-N-acetylglucosamine (UDP-GlcNAc). The C-terminal domain catalyzes the transfer of acetyl group from acetyl coenzyme A to glucosamine-1-phosphate (GlcN-1-P) to produce N-acetylglucosamine-1-phosphate (GlcNAc-1-P), which is converted into UDP-GlcNAc by the transfer of uridine 5-monophosphate (from uridine 5-triphosphate), a reaction catalyzed by the N-terminal domain. In Burkholderia ambifaria (strain MC40-6), this protein is Bifunctional protein GlmU.